Here is a 99-residue protein sequence, read N- to C-terminus: Large ribosomal subunit protein eL21 (99 aa).

The span at methionine 1 to lysine 18 shows a compositional bias: basic residues. A disordered region spans residues methionine 1–valine 26.

The protein belongs to the eukaryotic ribosomal protein eL21 family.

This Metallosphaera sedula (strain ATCC 51363 / DSM 5348 / JCM 9185 / NBRC 15509 / TH2) protein is Large ribosomal subunit protein eL21.